The chain runs to 179 residues: Large ribosomal subunit protein uL5 (179 aa).

Belongs to the universal ribosomal protein uL5 family. Part of the 50S ribosomal subunit; part of the 5S rRNA/L5/L18/L25 subcomplex. Contacts the 5S rRNA and the P site tRNA. Forms a bridge to the 30S subunit in the 70S ribosome.

Its function is as follows. This is one of the proteins that bind and probably mediate the attachment of the 5S RNA into the large ribosomal subunit, where it forms part of the central protuberance. In the 70S ribosome it contacts protein S13 of the 30S subunit (bridge B1b), connecting the 2 subunits; this bridge is implicated in subunit movement. Contacts the P site tRNA; the 5S rRNA and some of its associated proteins might help stabilize positioning of ribosome-bound tRNAs. This is Large ribosomal subunit protein uL5 from Vesicomyosocius okutanii subsp. Calyptogena okutanii (strain HA).